Here is a 328-residue protein sequence, read N- to C-terminus: MKAPVRVAVTGAAGQIGYALLFRIASGEMLGKDQPVILQLLELSNEKAQAALKGVMMELEDCAFPLLAGMVGTDDAEVAFKDIDVALLVGARPRGPGMERKDLLLENAKIFTAQGAALNKVAKRDVKVLVVGNPANTNAYIAMKSAPDLNPNNFTAMLRLDHNRALSQLALKLGKPVGGIEKLVVWGNHSPTMYPDYRFATSDGASIGDAINDQEWNASTFIPTVGKRGAAIIEARGLSSAASAANAAIDHVRDWVLGSNGKWVTMGVPSDGSYGISEGVIFGFPVTTENGQYSLVKDLPIDDFSQKYIDKTLAELEEERSGVSHLLG.

11–17 (GAAGQIG) contacts NAD(+). Substrate is bound by residues arginine 94 and arginine 100. NAD(+) contacts are provided by residues asparagine 107, glutamine 114, and 131 to 133 (VGN). 2 residues coordinate substrate: asparagine 133 and arginine 164. Histidine 189 functions as the Proton acceptor in the catalytic mechanism.

This sequence belongs to the LDH/MDH superfamily. MDH type 2 family.

It carries out the reaction (S)-malate + NAD(+) = oxaloacetate + NADH + H(+). Catalyzes the reversible oxidation of malate to oxaloacetate. The protein is Malate dehydrogenase of Xanthomonas oryzae pv. oryzae (strain PXO99A).